Reading from the N-terminus, the 294-residue chain is 33 kDa chaperonin (294 aa).

2 disulfide bridges follow: cysteine 238-cysteine 240 and cysteine 271-cysteine 274.

The protein belongs to the HSP33 family. Under oxidizing conditions two disulfide bonds are formed involving the reactive cysteines. Under reducing conditions zinc is bound to the reactive cysteines and the protein is inactive.

It is found in the cytoplasm. In terms of biological role, redox regulated molecular chaperone. Protects both thermally unfolding and oxidatively damaged proteins from irreversible aggregation. Plays an important role in the bacterial defense system toward oxidative stress. The polypeptide is 33 kDa chaperonin (Clostridium novyi (strain NT)).